A 447-amino-acid chain; its full sequence is Probable protein phosphatase 2C 71 (447 aa).

Residues 33–279 enclose the PPM-type phosphatase domain; it reads SYGYASSAGK…DNITCVVVRF (247 aa). 4 residues coordinate Mn(2+): aspartate 69, glycine 70, aspartate 231, and aspartate 270. Positions 284–297 are enriched in low complexity; sequence SANNNGSSSSEEAN. A disordered region spans residues 284 to 447; that stretch reads SANNNGSSSS…ARKTTPSIFN (164 aa). The segment covering 305 to 331 has biased composition (basic and acidic residues); sequence NDSDHKISAKETNQDHTTVNKDLDRNT. Polar residues-rich tracts occupy residues 346–374 and 392–423; these read ADNS…TGEK and KVPN…GSTG. The span at 424-438 shows a compositional bias: basic and acidic residues; the sequence is ERNRKPIKVHSDSAA.

Belongs to the PP2C family. The cofactor is Mg(2+). Requires Mn(2+) as cofactor.

It catalyses the reaction O-phospho-L-seryl-[protein] + H2O = L-seryl-[protein] + phosphate. The catalysed reaction is O-phospho-L-threonyl-[protein] + H2O = L-threonyl-[protein] + phosphate. The sequence is that of Probable protein phosphatase 2C 71 from Arabidopsis thaliana (Mouse-ear cress).